The sequence spans 833 residues: MGSDKRVSRSERSGRYGSGFDRDDRDDRDNRSRRRDSEYKRYRDERSDRYDDYRDYDSPERDRMRDRERRNSDRSEDGYHSDGDYMDHDYRQDYYMDEKESKTIMLRGLPININENDIRELVESFEGPQPADVRLMKRKTGLSRGFAFVEFYHLQDSTSWMEANQKKLVIQGKTIAMHYSNPRPKFEDWLCNKCGLYNFRRRLKCFRCGAAKAESDMEAPSGSSEAPQSADYYSDSGYVSSAIILRNIGPHTVVDSILSALAPYVSLVVSNIRLIKDKQTQQNRGFAFVQLPSALEASQLLQILQTLHPPLKIDGKTIGVDFAKSARKDLVLPDGHRVSAFSVASTAIAAAQWSSTQPAQQSGEGGDYAYLQPGQEGCSNYGQCSQDYQPFYQTQTGAAEQGTAPQAESSSPVPATTSAVVCQSPQMYQQPGSPTQSSTSTVAASATPASGTSAEEAAAPNAIVPGLKYSVPDTSTYQYDESSGYYYDPQTGLYYDPNSQYYYNSLTQQYLYWDGEKQTYLPAADGAGQSGTQPNGANPGTSKEGKEKKEKPKSKTAQQIAKDMERWAKSLNKQKENFKNSFQPLRDEERKESAAADAGFALFEKKQGSLLERQFLPDMMMMVNTEEEKPPNTALVAAYSGDSDNEEENERFIGAVDDEKLMDWKKLACLLCRRQFPNKDALTRHQQLSDLHKQNLEVYRRSKLSEQEYEAEQTERESKYRDRAAERRVKYGIPEPPEPKRKRFAPTVVNYEQPTKDGIDNSNIGNKMLQAMGWKEGSGLGRKSQGITAPIQAQVRMRGAGLGAKGSSYGVNTSDSYKDAVRKAMFARFSEME.

The interval 1–87 (MGSDKRVSRS…GYHSDGDYMD (87 aa)) is disordered. An RRM 1 domain is found at 102-182 (KTIMLRGLPI…KTIAMHYSNP (81 aa)). The RanBP2-type zinc-finger motif lies at 185 to 214 (KFEDWLCNKCGLYNFRRRLKCFRCGAAKAE). In terms of domain architecture, RRM 2 spans 241 to 325 (SAIILRNIGP…KTIGVDFAKS (85 aa)). Positions 396 to 428 (TGAAEQGTAPQAESSSPVPATTSAVVCQSPQMY) are enriched in polar residues. Disordered stretches follow at residues 396 to 458 (TGAA…EEAA) and 523 to 559 (AADG…TAQQ). Residues 429–458 (QQPGSPTQSSTSTVAASATPASGTSAEEAA) are compositionally biased toward low complexity. Residues 667–692 (LACLLCRRQFPNKDALTRHQQLSDLH) form a C2H2-type zinc finger. Residues 761-807 (NSNIGNKMLQAMGWKEGSGLGRKSQGITAPIQAQVRMRGAGLGAKGS) form the G-patch domain.

It belongs to the RBM5/RBM10 family. As to quaternary structure, component of the spliceosome A complex (also known as the prespliceosome). Appears to dissociate from the spliceosome upon formation of the spliceosome B complex (also known as the precatalytic spliceosome), in which the heterotrimeric U4/U6.U5 snRNPs are bound.

Its subcellular location is the nucleus. Component of the spliceosome A complex. Regulates alternative splicing of a number of mRNAs. May modulate splice site pairing after recruitment of the U1 and U2 snRNPs to the 5' and 3' splice sites of the intron. The sequence is that of RNA-binding protein 5-A (rbm5-a) from Xenopus laevis (African clawed frog).